The primary structure comprises 785 residues: E3 UFM1-protein ligase 1 homolog (785 aa).

The disordered stretch occupies residues 404 to 483; sequence GGNASNQLDD…GGGGSNKKSV (80 aa).

The protein belongs to the UFL1 family.

Its function is as follows. E3 UFM1-protein ligase that mediates ufmylation of target proteins. This chain is E3 UFM1-protein ligase 1 homolog, found in Drosophila willistoni (Fruit fly).